The primary structure comprises 3230 residues: Helicase SRCAP (3230 aa).

The segment at 1–71 (MQSSPSPAHP…GPPDGATVPL (71 aa)) is disordered. The segment covering 26 to 41 (GSNPVSPASSSSPASS) has biased composition (low complexity). One can recognise an HSA domain in the interval 124-196 (LPKVPEPPRP…EQAKLRRIAS (73 aa)). Disordered regions lie at residues 253–547 (QPLT…EEDD) and 559–581 (EEQS…LGPK). The span at 257 to 273 (SSKAGSSPCLGSSSAAS) shows a compositional bias: low complexity. Residues 283-313 (DDEDGDFQPQEDEEEDDEETIEVEEQQEGND) show a composition bias toward acidic residues. The segment covering 315–329 (EAQRREIELLRREGE) has biased composition (basic and acidic residues). The span at 337–356 (RSLPPQLLEGPSSPSQTPSS) shows a compositional bias: low complexity. A compositionally biased stretch (acidic residues) spans 397 to 425 (DEDDEEFTANEEEAEDEEDTIAAEEQLEG). Positions 426–441 (EVDHAMELSELAREGE) are enriched in basic and acidic residues. Acidic residues-rich tracts occupy residues 462 to 490 (SEDE…EPPQ), 503 to 517 (RSED…EEET), and 524 to 533 (EESESEESED). Residues 630–795 (VTMYEKKLNG…WSLMHFLMPH (166 aa)) form the Helicase ATP-binding domain. 643-650 (DEMGLGKT) is a binding site for ATP. Disordered regions lie at residues 1017–1045 (APLG…PQVL), 1058–1125 (PPLI…PGSS), and 1138–1166 (TFPP…TPAP). Pro residues-rich tracts occupy residues 1018–1030 (PLGP…PPGP) and 1058–1076 (PPLI…PPLQ). Positions 1093–1107 (LSGTSRPPTPTLSLK) are enriched in low complexity. Pro residues predominate over residues 1108 to 1123 (PTPPAPVRLSPAPPPG). Positions 1138-1160 (TFPPAAATTTSTTTATATTTAVP) are enriched in low complexity. At Ser1172 the chain carries Phosphoserine. Disordered stretches follow at residues 1320 to 1366 (GLTP…APMP), 1406 to 1425 (SLPG…PLAS), 1629 to 1760 (VPVM…ASPV), and 1839 to 1893 (SRLP…EEKR). The span at 1323-1336 (PVPPLAPAPRPPSS) shows a compositional bias: pro residues. Low complexity predominate over residues 1337 to 1360 (GLPAVLNPRPTLTPGRLPTPTLGT). Low complexity predominate over residues 1675–1691 (PASTQTLALAPALAPTL). The segment covering 1692–1733 (GGSSPSQTLSLGTGNPQGPFPTQTLSLTPASSLVPTPAQTLS) has biased composition (polar residues). Positions 1750–1760 (PAPPLAPASPV) are enriched in pro residues. In terms of domain architecture, Helicase C-terminal spans 2044 to 2197 (KLQTLAVLLR…DMAIEGGNFT (154 aa)). 6 disordered regions span residues 2214 to 2233 (LEEP…EETV), 2271 to 2298 (FNEN…MSRA), 2327 to 2453 (VSRE…APAA), 2564 to 2583 (LELA…VPPK), 2598 to 3081 (KNLS…GRKS), and 3095 to 3230 (DLAD…KAKT). Low complexity predominate over residues 2215–2225 (EEPSSSSVPSA). Basic and acidic residues-rich tracts occupy residues 2284 to 2298 (EAGR…MSRA), 2327 to 2358 (VSRE…RLPQ), and 2386 to 2403 (KAPE…RGAR). Over residues 2438 to 2448 (RPAPRPRPTPA) the composition is skewed to pro residues. 2 stretches are compositionally biased toward low complexity: residues 2564–2579 (LELA…SLSL) and 2600–2611 (LSLTPSAPSLTL). Positions 2669-2679 (EADRTSEELTE) are enriched in basic and acidic residues. Low complexity predominate over residues 2694-2712 (VTAEVAAPSTSSSATSSPE). Residues 2782 to 2794 (SETSASPGSPSVR) are compositionally biased toward polar residues. A compositionally biased stretch (low complexity) spans 2807-2817 (GPCEAAPSSSL). Positions 2856–2868 (VKRRRGRPPKKNR) are enriched in basic residues. Positions 2857-2869 (KRRRGRPPKKNRS) form a DNA-binding region, a.T hook 1. Positions 2913–2926 (IPGPQPLGPQPVHR) are enriched in pro residues. Residues 2936 to 2948 (KRRRGRPPKARDL) constitute a DNA-binding region (a.T hook 2). Over residues 2953–2965 (TISSAGDGNSESR) the composition is skewed to polar residues. The span at 2967–2982 (QPPPHPSPLTPLPPLL) shows a compositional bias: pro residues. The span at 2983 to 3002 (VCPTATVANTVTTVTISTSP) shows a compositional bias: low complexity. The a.T hook 3 DNA-binding region spans 3004–3016 (KRKRGRPPKNPPS). The span at 3011-3020 (PKNPPSPRPS) shows a compositional bias: pro residues. Low complexity predominate over residues 3044-3053 (PQGQGESEGS). Residues 3168-3184 (SVEESEAEASGEEEEGD) are compositionally biased toward acidic residues.

Belongs to the SNF2/RAD54 helicase family. SWR1 subfamily. As to quaternary structure, interacts with CREBBP and EP300. May be part of a complex containing SRCAP, CREBBP, CARM1 and GRIP1. Component of the chromatin-remodeling SRCAP complex composed of at least SRCAP, DMAP1, RUVBL1, RUVBL2, ACTL6A, YEATS4, VPS72, ACTR6 and ZNHIT1. Component of a NuA4-related complex which contains EP400, TRRAP/PAF400, SRCAP, BRD8/SMAP, EPC1, DMAP1/DNMAP1, RUVBL1/TIP49, RUVBL2, actin, ACTL6A/BAF53A, VPS72 and YEATS4/GAS41. In terms of assembly, (Microbial infection) Interacts with hepatitis C virus (HCV) NS5A. (Microbial infection) Interacts with human adenovirus 2 DBP.

It is found in the nucleus. Functionally, catalytic component of the SRCAP complex which mediates the ATP-dependent exchange of histone H2AZ/H2B dimers for nucleosomal H2A/H2B, leading to transcriptional regulation of selected genes by chromatin remodeling. Acts as a coactivator for CREB-mediated transcription, steroid receptor-mediated transcription, and Notch-mediated transcription. In Homo sapiens (Human), this protein is Helicase SRCAP (SRCAP).